A 491-amino-acid chain; its full sequence is Dipeptide and tripeptide permease B (491 aa).

The Cytoplasmic portion of the chain corresponds to 1–26; it reads MNNTAPGLLHQPKPFFMIFFVELWER. A helical transmembrane segment spans residues 27–47; sequence FGYYGVQGILAVFFVKQLGFS. Residues 48 to 51 lie on the Periplasmic side of the membrane; sequence QEQA. A helical membrane pass occupies residues 52–72; it reads FITFGAFAALVYGLISIGGYV. Residues 73–81 are Cytoplasmic-facing; that stretch reads GDHLLGTKR. A helical membrane pass occupies residues 82-102; that stretch reads TMVLGAIVLALGYFMTGMSLL. At 103–105 the chain is on the periplasmic side; that stretch reads KPE. Residues 106–126 traverse the membrane as a helical segment; sequence MIFIALGTIAVGNGLFKANPA. The Cytoplasmic segment spans residues 127-145; the sequence is SLLSKCYPPKDPRLDGAFT. Residues 146–166 traverse the membrane as a helical segment; the sequence is LFYMSINIGSLLSLSLAPIIA. The Periplasmic portion of the chain corresponds to 167 to 171; it reads ERFGY. The chain crosses the membrane as a helical span at residues 172–192; the sequence is AVTYNLCGLGLIIALLVYFAC. At 193–210 the chain is on the cytoplasmic side; the sequence is RGMVRSIGSAPDHQPLNY. The helical transmembrane segment at 211-231 threads the bilayer; that stretch reads GKLLLVLAGAVVMIFLCAWLM. Histidine 232 is a topological domain (periplasmic). A helical transmembrane segment spans residues 233-253; sequence NVGVANIVLIAVSAVVLYFFF. The Cytoplasmic segment spans residues 254–266; sequence REAFKQDKTGRNR. Residues 267–287 traverse the membrane as a helical segment; that stretch reads MFVAFILMIEAVLFYILYAQM. Residues 288 to 312 lie on the Periplasmic side of the membrane; the sequence is PTSLNFFAINNVRHELLGFAINPVS. The chain crosses the membrane as a helical span at residues 313–335; that stretch reads FQALNPFWVVVASPILASIYTRL. Residues 336–349 lie on the Cytoplasmic side of the membrane; the sequence is GSRGRDMTMPTKFT. Residues 350–370 form a helical membrane-spanning segment; it reads LGMLLCSLGFLTAAAAGMWFA. The Periplasmic segment spans residues 371–378; that stretch reads DAQGLTSP. Residues 379–399 form a helical membrane-spanning segment; the sequence is WFVVLVYLFQSLGELMISALG. Residues 400-423 are Cytoplasmic-facing; the sequence is LAMVAALVPQYLMGFILGMWFLTQ. Residues 424 to 444 form a helical membrane-spanning segment; sequence AAAFLLGGYVATFTAVPAGIH. The Periplasmic portion of the chain corresponds to 445–454; that stretch reads DPLQTLPIYT. Residues 455–475 traverse the membrane as a helical segment; it reads GVFGKIGIATLIVTLVMAAMV. Residues 476 to 491 lie on the Cytoplasmic side of the membrane; the sequence is PWLNRMMNTPADGQKA.

Belongs to the major facilitator superfamily. Proton-dependent oligopeptide transporter (POT/PTR) (TC 2.A.17) family. DtpB subfamily.

The protein localises to the cell inner membrane. Proton-dependent permease that transports di- and tripeptides. This chain is Dipeptide and tripeptide permease B, found in Edwardsiella piscicida.